A 506-amino-acid chain; its full sequence is UDP-N-acetylmuramoyl-L-alanyl-D-glutamate--2,6-diaminopimelate ligase (506 aa).

UDP-N-acetyl-alpha-D-muramoyl-L-alanyl-D-glutamate is bound at residue Ser38. Gly124–Ser130 contributes to the ATP binding site. UDP-N-acetyl-alpha-D-muramoyl-L-alanyl-D-glutamate contacts are provided by residues Thr166–Thr167, Ser193, and Arg201. Lys233 carries the post-translational modification N6-carboxylysine. Residues Arg401, Asp425–Arg428, Gly477, and Glu481 each bind meso-2,6-diaminopimelate. A Meso-diaminopimelate recognition motif motif is present at residues Asp425–Arg428.

The protein belongs to the MurCDEF family. MurE subfamily. Mg(2+) is required as a cofactor. Carboxylation is probably crucial for Mg(2+) binding and, consequently, for the gamma-phosphate positioning of ATP.

It is found in the cytoplasm. It carries out the reaction UDP-N-acetyl-alpha-D-muramoyl-L-alanyl-D-glutamate + meso-2,6-diaminopimelate + ATP = UDP-N-acetyl-alpha-D-muramoyl-L-alanyl-gamma-D-glutamyl-meso-2,6-diaminopimelate + ADP + phosphate + H(+). It functions in the pathway cell wall biogenesis; peptidoglycan biosynthesis. Functionally, catalyzes the addition of meso-diaminopimelic acid to the nucleotide precursor UDP-N-acetylmuramoyl-L-alanyl-D-glutamate (UMAG) in the biosynthesis of bacterial cell-wall peptidoglycan. The sequence is that of UDP-N-acetylmuramoyl-L-alanyl-D-glutamate--2,6-diaminopimelate ligase from Leptospira interrogans serogroup Icterohaemorrhagiae serovar copenhageni (strain Fiocruz L1-130).